The following is a 508-amino-acid chain: WD repeat-containing protein JIP5 (508 aa).

6 WD repeats span residues 62 to 105 (EARK…WRTK), 106 to 145 (RHKG…VVKK), 149 to 188 (DGGS…TKNT), 193 to 233 (HGGD…MKQP), 253 to 294 (DQED…LEDQ), and 345 to 382 (SGLD…NSDS). The segment at 376-508 (KEENSDSDSD…SHGITKFDGL (133 aa)) is disordered. The segment covering 380-393 (SDSDSDSDINDDSE) has biased composition (acidic residues). A compositionally biased stretch (low complexity) spans 407-419 (ELGSGSESEVESD). Residues 431-472 (CTGSDLPGDIEGSEGENNSNDDDNHDDREELWKELDQPTSDE) form a WD 7 repeat. Positions 441 to 454 (EGSEGENNSNDDDN) are enriched in acidic residues. Residues 455 to 466 (HDDREELWKELD) show a composition bias toward basic and acidic residues. Residues 478 to 492 (KRSLKVKDKKNKKFK) are compositionally biased toward basic residues.

This sequence belongs to the WD repeat WDR55 family.

It localises to the nucleus. The protein resides in the nucleolus. The polypeptide is WD repeat-containing protein JIP5 (JIP5) (Candida glabrata (strain ATCC 2001 / BCRC 20586 / JCM 3761 / NBRC 0622 / NRRL Y-65 / CBS 138) (Yeast)).